A 196-amino-acid polypeptide reads, in one-letter code: Peptidyl-tRNA hydrolase (196 aa).

Tyr-14 serves as a coordination point for tRNA. His-19 (proton acceptor) is an active-site residue. TRNA-binding residues include Tyr-64, Asn-66, and Asn-112.

This sequence belongs to the PTH family. As to quaternary structure, monomer.

Its subcellular location is the cytoplasm. It catalyses the reaction an N-acyl-L-alpha-aminoacyl-tRNA + H2O = an N-acyl-L-amino acid + a tRNA + H(+). In terms of biological role, hydrolyzes ribosome-free peptidyl-tRNAs (with 1 or more amino acids incorporated), which drop off the ribosome during protein synthesis, or as a result of ribosome stalling. Its function is as follows. Catalyzes the release of premature peptidyl moieties from peptidyl-tRNA molecules trapped in stalled 50S ribosomal subunits, and thus maintains levels of free tRNAs and 50S ribosomes. The chain is Peptidyl-tRNA hydrolase from Methylocella silvestris (strain DSM 15510 / CIP 108128 / LMG 27833 / NCIMB 13906 / BL2).